The primary structure comprises 521 residues: GRAS family protein RAD1 (521 aa).

The region spanning 137 to 520 (DGSCADGMRL…KPIVAVSCWK (384 aa)) is the GRAS domain. The tract at residues 144–212 (MRLVQLLIAC…PIGNNSAGSD (69 aa)) is leucine repeat I (LRI). The tract at residues 231–301 (FKLVYENCPH…HRVRRLRITA (71 aa)) is VHIID. The VHIID signature appears at 262–266 (LHVVD). Residues 311–343 (VIGEELSIYAKNLGIHLEFSIVEKNLENLKPKD) are leucine repeat II (LRII). The segment at 352–443 (LVVNSILQLH…QFYFAEEIKN (92 aa)) is PFYRE. An SAW region spans residues 446–520 (SCEGPLRMER…KPIVAVSCWK (75 aa)).

The protein belongs to the GRAS family. Interacts with RAM1. Interacts with NSP2.

It is found in the nucleus. In terms of biological role, transcription factor acting as a regulator of arbuscular mycorrhiza (AM)-related genes (e.g. STR). Required for the morphogenesis of arbuscules upon symbiosis with AM fungi (e.g. Glomus versiforme). Also involved in restricting mycorrhizal colonization of the root meristem. The chain is GRAS family protein RAD1 from Medicago truncatula (Barrel medic).